The primary structure comprises 87 residues: UPF0250 protein BUAPTUC7_482 (87 aa).

Belongs to the UPF0250 family.

In Buchnera aphidicola subsp. Acyrthosiphon pisum (strain Tuc7), this protein is UPF0250 protein BUAPTUC7_482.